Reading from the N-terminus, the 93-residue chain is Small ribosomal subunit protein uS17 (93 aa).

Belongs to the universal ribosomal protein uS17 family. As to quaternary structure, part of the 30S ribosomal subunit.

Functionally, one of the primary rRNA binding proteins, it binds specifically to the 5'-end of 16S ribosomal RNA. In Rhodococcus erythropolis (strain PR4 / NBRC 100887), this protein is Small ribosomal subunit protein uS17.